The primary structure comprises 116 residues: MTDKKVTRLRRARKARLKMHELEVVRLCVFRSSQHIYAQVISADGNKVLASASTLDKELRDGATGNIDAATKVGQLVATRAKAAGVSQVAFDRSGFKYHGRVKALADAAREAGLEF.

It belongs to the universal ribosomal protein uL18 family. Part of the 50S ribosomal subunit; part of the 5S rRNA/L5/L18/L25 subcomplex. Contacts the 5S and 23S rRNAs.

Functionally, this is one of the proteins that bind and probably mediate the attachment of the 5S RNA into the large ribosomal subunit, where it forms part of the central protuberance. This Pseudomonas fluorescens (strain ATCC BAA-477 / NRRL B-23932 / Pf-5) protein is Large ribosomal subunit protein uL18.